We begin with the raw amino-acid sequence, 911 residues long: Transferrin-binding protein A (911 aa).

An N-terminal signal peptide occupies residues 1–24; that stretch reads MQQQHLFRLNILCLSLMTALPAYA. The TonB box motif lies at 38–45; the sequence is DTIQVKAK. One can recognise a TBDR plug domain in the interval 51-176; it reads RDNEVTGLGK…LAGSVAFQTK (126 aa). Residues 187–911 enclose the TBDR beta-barrel domain; that stretch reads QWGIQSKTAY…NYTFSLEMKF (725 aa). The short motif at 894–911 is the TonB C-terminal box element; the sequence is NRYAAPGRNYTFSLEMKF.

This sequence belongs to the TonB-dependent receptor family. In terms of assembly, binds both human apo- and holo-transferrin (TF), via the TF C-terminus. Forms a large complex with TF and TbpB.

The protein localises to the cell outer membrane. Neisseria acquires iron by extracting it from serum transferrin (TF) in its human host. Acts as a TF receptor and is required for TF utilization. Binds both apo- and holo-TF, via the TF C-terminus. The polypeptide is Transferrin-binding protein A (Neisseria meningitidis serogroup B).